The chain runs to 308 residues: Bifunctional protein FolD (308 aa).

Residues glycine 171–serine 173, serine 198, and isoleucine 239 each bind NADP(+).

The protein belongs to the tetrahydrofolate dehydrogenase/cyclohydrolase family. As to quaternary structure, homodimer.

The enzyme catalyses (6R)-5,10-methylene-5,6,7,8-tetrahydrofolate + NADP(+) = (6R)-5,10-methenyltetrahydrofolate + NADPH. The catalysed reaction is (6R)-5,10-methenyltetrahydrofolate + H2O = (6R)-10-formyltetrahydrofolate + H(+). The protein operates within one-carbon metabolism; tetrahydrofolate interconversion. Functionally, catalyzes the oxidation of 5,10-methylenetetrahydrofolate to 5,10-methenyltetrahydrofolate and then the hydrolysis of 5,10-methenyltetrahydrofolate to 10-formyltetrahydrofolate. This Borreliella burgdorferi (strain ATCC 35210 / DSM 4680 / CIP 102532 / B31) (Borrelia burgdorferi) protein is Bifunctional protein FolD.